The chain runs to 432 residues: MSNNVVVLGTQWGDEGKGKVVDILTERAKYVIRYQGGHNAGHTLVINGEKTILHLIPSGILRENVKSIIAHGVVLSPEALIKEIHELEARGIPVRQRMLISEACPLLLSYHVAMDIAREKARGTNALGTTGRGIGPAYEDKVARRALRVSDLFNKESFAIKLKDIVDYYNFQLVHYYKVEAVSYQKILNDIMVVTDMLTSMVADISVLLYNAYQQGDIMMFEGAQGTLLDIDHGTYPYVTSSNTTAGCVTTGSGLGPHYIGYVLGIVKAYSTRVGAGPFPTELFDDTGNFLCLKGHEFGATTGRRRRTGWLDAVALRRAVHINSISGLCLTKLDVLDGLKEIKICSAYRMQDGCIIYTTPIALEKWEGIEPIYETLPGWNETTVGIQALADLPRAAHQYIKLIEELTRVPVDIISTGPDRRDTIILHDPFSD.

Residues glycine 13 to lysine 19 and glycine 41 to threonine 43 contribute to the GTP site. Catalysis depends on aspartate 14, which acts as the Proton acceptor. The Mg(2+) site is built by aspartate 14 and glycine 41. IMP is bound by residues aspartate 14–lysine 17, asparagine 39–histidine 42, threonine 130, arginine 144, glutamine 225, threonine 240, and arginine 304. Residue histidine 42 is the Proton donor of the active site. Alanine 300–arginine 306 contributes to the substrate binding site. Residues arginine 306, lysine 332–aspartate 334, and serine 415–glycine 417 contribute to the GTP site.

The protein belongs to the adenylosuccinate synthetase family. Homodimer. Mg(2+) is required as a cofactor.

It localises to the cytoplasm. It catalyses the reaction IMP + L-aspartate + GTP = N(6)-(1,2-dicarboxyethyl)-AMP + GDP + phosphate + 2 H(+). Its pathway is purine metabolism; AMP biosynthesis via de novo pathway; AMP from IMP: step 1/2. Its function is as follows. Plays an important role in the de novo pathway of purine nucleotide biosynthesis. Catalyzes the first committed step in the biosynthesis of AMP from IMP. The sequence is that of Adenylosuccinate synthetase from Baumannia cicadellinicola subsp. Homalodisca coagulata.